A 581-amino-acid polypeptide reads, in one-letter code: Metal transporter Nramp7.1 (581 aa).

Residues Asn11 and Asn19 are each glycosylated (N-linked (GlcNAc...) asparagine). Transmembrane regions (helical) follow at residues 57–77 (FLSY…PGNL), 90–110 (ELLW…SLAA), 146–166 (YCLW…EGII), 181–201 (LLIG…WVGV), 224–244 (LLIA…MSYV), 270–290 (IALL…ALVL), and 307–327 (YFLI…LAVI). An N-linked (GlcNAc...) asparagine glycan is attached at Asn338. The next 5 membrane-spanning stretches (helical) occupy residues 370-390 (IYAI…TYAG), 409-429 (LVTR…GGSS), 434-454 (LIII…FALI), 473-493 (IYII…NIYY), and 513-533 (VFIG…VIYL). Positions 551 to 581 (PQQQANMENGLGPEMERVPYREDLADIPLPE) are disordered. Basic and acidic residues predominate over residues 564 to 574 (EMERVPYREDL).

This sequence belongs to the NRAMP (TC 2.A.55) family.

The protein localises to the membrane. Probable divalent metal transporter. The polypeptide is Metal transporter Nramp7.1 (Populus trichocarpa (Western balsam poplar)).